The sequence spans 274 residues: Undecaprenyl-diphosphatase 1 (274 aa).

Helical transmembrane passes span 47–67 (QVFL…LYFN), 85–105 (VSMW…GIPF), 113–133 (FYNY…FIMI), 150–170 (ITYT…VFPG), 196–216 (FFLA…KFGL), 225–245 (ILFI…KFLM), and 253–273 (FKAF…YFLI).

It belongs to the UppP family.

It localises to the cell membrane. It catalyses the reaction di-trans,octa-cis-undecaprenyl diphosphate + H2O = di-trans,octa-cis-undecaprenyl phosphate + phosphate + H(+). Its function is as follows. Catalyzes the dephosphorylation of undecaprenyl diphosphate (UPP). Confers resistance to bacitracin. The polypeptide is Undecaprenyl-diphosphatase 1 (Clostridium acetobutylicum (strain ATCC 824 / DSM 792 / JCM 1419 / IAM 19013 / LMG 5710 / NBRC 13948 / NRRL B-527 / VKM B-1787 / 2291 / W)).